A 667-amino-acid polypeptide reads, in one-letter code: High affinity sulfate transporter 1 (667 aa).

The interval 16–38 (ETRSNSSSHRHGGGGGGDDTTSL) is disordered. 11 consecutive transmembrane segments (helical) span residues 106 to 126 (GDFI…LAYA), 131 to 151 (LDPW…AFMG), 156 to 176 (IAIG…SNEI), 185 to 205 (LRLA…LGVC), 208 to 228 (GFLI…GAAI), 269 to 289 (WETI…KYIA), 296 to 316 (FWVS…FVYI), 350 to 370 (GAGV…AIAI), 425 to 445 (VSNI…TPLF), 452 to 472 (VLAS…AMVL), and 486 to 506 (GAFF…AVAI). Residues 537 to 660 (QYPKAAQIPG…LTVADAVATY (124 aa)) enclose the STAS domain.

This sequence belongs to the SLC26A/SulP transporter (TC 2.A.53) family.

It localises to the membrane. Its function is as follows. High-affinity H(+)/sulfate cotransporter that mediates the uptake of sulfate by plant roots from low concentrations of sulfate in the soil solution. This chain is High affinity sulfate transporter 1 (ST1), found in Stylosanthes hamata (Caribbean stylo).